A 387-amino-acid chain; its full sequence is Natterin-4 (387 aa).

A signal peptide spans 1–18 (MKLLVLLVTLLVLSWTSA). The propeptide occupies 19-46 (EDVGDQEILQQHNEDNNHKSELGEAAPQ). The span at 31 to 40 (NEDNNHKSEL) shows a compositional bias: basic and acidic residues. The interval 31–57 (NEDNNHKSELGEAAPQRTDNETSQLGQ) is disordered.

It belongs to the natterin family. In terms of processing, contains 4 disulfide bonds. As to expression, expressed by the venom gland.

It localises to the secreted. Its activity is regulated as follows. Inhibited by tissue-kallikrein inhibitor TKI and trasylol. Plasma kallikrein inhibitor PKSI527 and classical inhibitors of serine-, metallo-, thiol- or aspartate-peptidases evokes a minor inhibition of the peptide digestion. In terms of biological role, shows nociceptive, edema-inducing and kininogenase activity with release of kallidin from low molecular weight kininogen. The cleavage occurs at Met-Lys bonds. This Thalassophryne nattereri (Copper Joe toadfish) protein is Natterin-4.